The sequence spans 1025 residues: Multidrug resistance protein MdtC (1025 aa).

A run of 12 helical transmembrane segments spans residues 3–23 (FFALFIYRPVATILIAVAITL), 333–353 (EVEQTLVISIALVILVVFLFL), 360–380 (LIPAVAVPVSLIGTFAAMYLC), 387–407 (LSLMALTIATGFVVDDAIVVL), 431–451 (VGFTVLSMSVSLVAVFLPLLL), 463–483 (FAVTLSVAIGISLVISLTLTP), 528–548 (IVGLVLVGTIALNVWMYITIP), 853–873 (VILILAAIATVYIVLGILYES), 875–895 (VHPLTILSTLPSAGVGALLAL), 897–917 (LFDAPFSLIALIGIMLLIGIV), 953–973 (PIMMTTLAALFGALPLVISSG), and 984–1004 (ITIVGGLAMSQLLTLYTTPVV).

It belongs to the resistance-nodulation-cell division (RND) (TC 2.A.6) family. MdtC subfamily. Part of a tripartite efflux system composed of MdtA, MdtB and MdtC. MdtC forms a heteromultimer with MdtB.

It localises to the cell inner membrane. This Enterobacter sp. (strain 638) protein is Multidrug resistance protein MdtC.